We begin with the raw amino-acid sequence, 302 residues long: Glycine--tRNA ligase alpha subunit (302 aa).

Belongs to the class-II aminoacyl-tRNA synthetase family. As to quaternary structure, tetramer of two alpha and two beta subunits.

Its subcellular location is the cytoplasm. It carries out the reaction tRNA(Gly) + glycine + ATP = glycyl-tRNA(Gly) + AMP + diphosphate. The chain is Glycine--tRNA ligase alpha subunit (glyQ) from Haemophilus influenzae (strain ATCC 51907 / DSM 11121 / KW20 / Rd).